The chain runs to 290 residues: Endonuclease 2 (290 aa).

Positions 1-27 are cleaved as a signal peptide; the sequence is MANQKGLHVVMMIITVWLLYAAPNIHG. A divalent metal cation is bound by residues Trp28 and His33. A substrate-binding site is contributed by 28–33; sequence WGKEGH. A disulfide bridge connects residues Cys37 and Cys68. A divalent metal cation-binding residues include Asp72 and His85. Residues 72–76, 85–88, and 94–99 each bind substrate; these read DRVKF, HYIN, and SYQYNR. Intrachain disulfides connect Cys93/Cys245, Cys101/Cys111, and Cys226/Cys232. Asn118 and Tyr136 together coordinate substrate. Asn118 is a glycosylation site (N-linked (GlcNAc...) asparagine). N-linked (GlcNAc...) asparagine glycosylation is present at Asn137. A divalent metal cation is bound by residues His147, Asp151, His157, His181, and Asp185. Residues 147–196 form a substrate binding region; the sequence is HFMGDIHQPLHVSYASDKGGNTIEVHWYTRKANLHHIWDSNIIETAEADL. N-linked (GlcNAc...) asparagine glycosylation is present at Asn211. The propeptide at 283–290 is removed in mature form; sequence ATLNRIFG.

It belongs to the nuclease type I family. As to quaternary structure, monomer. The cofactor is Mn(2+). Requires Ca(2+) as cofactor. It depends on Zn(2+) as a cofactor. In terms of processing, N-glycosylation is required for enzymatic stability and activity.

The enzyme catalyses Endonucleolytic cleavage to 5'-phosphomononucleotide and 5'-phosphooligonucleotide end-products.. With respect to regulation, ssDNase activity is inhibited by the divalent cation chelator EDTA and the reducing agent DTT. Divalent metal ions (e.g. Ca(2+), Mg(2+) and Zn(2+)) and DTT represses RNase activity. RNase activity is enhanced by EDTA. Also repressed by vanadate (VO(4)(3-)) and phosphate (PO(4)(3-)) by occupying the active site. In terms of biological role, endonuclease mostly active on RNA and ssDNA, and to a lower extent, on dsDNA. Can cleave mismatch regions in heteroduplex DNA containing single base pair mismatches or insertion/deletion bases. In contradiction with PubMed:22506810, cannot hydrolyze single-stranded DNA and does not cleave mismatches. This is Endonuclease 2 from Arabidopsis thaliana (Mouse-ear cress).